Here is a 227-residue protein sequence, read N- to C-terminus: Deoxyribose-phosphate aldolase (227 aa).

The active-site Proton donor/acceptor is the Asp-98. Lys-161 serves as the catalytic Schiff-base intermediate with acetaldehyde. Lys-191 functions as the Proton donor/acceptor in the catalytic mechanism.

The protein belongs to the DeoC/FbaB aldolase family. DeoC type 1 subfamily.

The protein localises to the cytoplasm. It carries out the reaction 2-deoxy-D-ribose 5-phosphate = D-glyceraldehyde 3-phosphate + acetaldehyde. The protein operates within carbohydrate degradation; 2-deoxy-D-ribose 1-phosphate degradation; D-glyceraldehyde 3-phosphate and acetaldehyde from 2-deoxy-alpha-D-ribose 1-phosphate: step 2/2. Its function is as follows. Catalyzes a reversible aldol reaction between acetaldehyde and D-glyceraldehyde 3-phosphate to generate 2-deoxy-D-ribose 5-phosphate. The protein is Deoxyribose-phosphate aldolase of Frankia alni (strain DSM 45986 / CECT 9034 / ACN14a).